The chain runs to 237 residues: Small ribosomal subunit protein uS2c (237 aa).

The protein belongs to the universal ribosomal protein uS2 family.

It is found in the plastid. The chain is Small ribosomal subunit protein uS2c (rps2) from Epifagus virginiana (Beechdrops).